The primary structure comprises 2004 residues: Histone acetyltransferase KAT6A (2004 aa).

The SAMD1-like winged helix (WH) domain maps to 1-77 (MVKLANPLYT…LNSYKDPDNP (77 aa)). Residues 1–144 (MVKLANPLYT…FGGSAASGFH (144 aa)) form a required for activation of RUNX1-1 region. The interval 52–166 (ELSVKDGTIL…HGRLLKDGPL (115 aa)) is required for nuclear localization. Residues 95–171 (QNVDWNKLIK…KDGPLYRLNT (77 aa)) enclose the H15 domain. The interval 144–664 (HQQLRLAIKR…RKGYGRFLID (521 aa)) is interaction with PML. Lysine 172 carries the post-translational modification N6-acetyllysine. 2 PHD-type zinc fingers span residues 206–265 (IPIC…CKTC) and 259–313 (CIEC…CRPR). Residues 312-664 (PRKKGRKLLQ…RKGYGRFLID (353 aa)) are interaction with RUNX1-1. Residues 334-375 (PIGRPKNRLKKQNTVSKGPFSKVRTGPGRGRKRKITLSSQSA) are disordered. 2 positions are modified to N6-acetyllysine: lysine 350 and lysine 355. Threonine 369 carries the phosphothreonine; by PKB/AKT1 modification. Position 420 is a phosphoserine (serine 420). Residues 441–464 (KRGNRKSSTSDWPTDNQDGWDGKQ) form a disordered region. Residues 446-457 (KSSTSDWPTDNQ) show a composition bias toward polar residues. Serine 473 carries the post-translational modification Phosphoserine. Positions 488–778 (IQEQALQKVG…VDPECLRWTP (291 aa)) are catalytic. The 275-residue stretch at 504-778 (PQVRCPSVIE…VDPECLRWTP (275 aa)) folds into the MYST-type HAT domain. The segment at 507–810 (RCPSVIEFGK…EPQCQERELE (304 aa)) is mediates interaction with BRPF1, required for histone H3 acetyltransferase activity. The C2HC MYST-type zinc finger occupies 537–562 (LYLCEFCLKYMKSRTILQQHMKKCGW). N6-acetyllysine; by autocatalysis is present on lysine 604. Acetyl-CoA-binding positions include 645-649 (SCIMI) and 654-660 (QRKGYGR). The Proton donor/acceptor role is filled by glutamate 680. Acetyl-CoA is bound at residue serine 684. 3 disordered regions span residues 785–1445 (VVSE…AYQD), 1461–1621 (QADE…MMQQ), and 1637–1721 (SCVV…MEIP). Phosphoserine occurs at positions 787 and 812. Over residues 787 to 803 (SEEEEEEAEEGENEEPQ) the composition is skewed to acidic residues. Lysine 815 is modified (N6-acetyllysine). Positions 817-836 (VSHENKEQDSYSVESEKKPE) are enriched in basic and acidic residues. Residue lysine 834 forms a Glycyl lysine isopeptide (Lys-Gly) (interchain with G-Cter in SUMO2) linkage. Basic residues predominate over residues 864–873 (RRGRWGRKNR). Over residues 874–888 (KTQERFGDKDSKLLL) the composition is skewed to basic and acidic residues. Residue tyrosine 899 is modified to Phosphotyrosine. 2 stretches are compositionally biased toward basic and acidic residues: residues 931-942 (GKPDLPKRRLSE) and 953-980 (KSPEALKCRLTEGSERLPRRYSEGDRAV). 3 positions are modified to phosphoserine: serine 941, serine 954, and serine 974. Lysine 1007 carries the N6-acetyllysine modification. Basic residues predominate over residues 1009–1030 (TLKRKKPFLHRRRRVRKRKHHN). Over residues 1031-1042 (SSVVTETISETT) the composition is skewed to low complexity. Acidic residues-rich tracts occupy residues 1043–1053 (EVLDEPFEDSD) and 1065–1078 (FEIDEEEEEEDENE). Phosphoserine is present on residues serine 1089, serine 1090, and serine 1113. Residues 1107 to 1118 (EEEDEESDDADD) are compositionally biased toward acidic residues. A compositionally biased stretch (basic residues) spans 1146 to 1172 (LKKKKGWPKGKSRKPIHWKKRPGRKPG). A compositionally biased stretch (basic and acidic residues) spans 1203–1223 (KIQESEETVEPKEDMPLPEER). Acidic residues predominate over residues 1224 to 1245 (KEEEEMQAEAEEAEEGEEEDAA). Residues 1246-1262 (SSEVPAASPADSSNSPE) are compositionally biased toward low complexity. Residues 1275-1287 (EKPRVSEEQRQSE) are compositionally biased toward basic and acidic residues. Acidic residues predominate over residues 1288–1305 (EEQQELEEPEPEEEEDAA). Basic and acidic residues-rich tracts occupy residues 1323-1345 (HLESTKKKELEEQPTREDVKEEP), 1358-1367 (KSREKIKDKE), and 1398-1420 (EDSHTKEELIELKEEEEIPHSEL). Lysine 1342 participates in a covalent cross-link: Glycyl lysine isopeptide (Lys-Gly) (interchain with G-Cter in SUMO2). The span at 1481 to 1503 (SPISSVQSHPSQSVRSVSSPNVP) shows a compositional bias: low complexity. Positions 1508–1529 (GYTQISPEQGSLSAPSMQNMET) are enriched in polar residues. Residues 1517 to 1642 (GSLSAPSMQN…KSPQSCVVER (126 aa)) form an interaction with RUNX1-2 region. An interaction with PML region spans residues 1517–1741 (GSLSAPSMQN…YERIPGDFGA (225 aa)). The segment covering 1534–1548 (DVPSVSDHSQQVVDS) has biased composition (low complexity). Polar residues predominate over residues 1556–1573 (IESTTENYENPSSYDSTM). Positions 1574-1621 (GGSICGNSSSQSSCSYGGLSSSSSLTQSSCVVTQQMASMGSSCSMMQQ) are enriched in low complexity. Pro residues predominate over residues 1650-1699 (QPPPPPPQQPQPPPPQPQPAPQPPPPQQQPQQQPQPQPQQPPPPPPPQQQ). The span at 1702-1712 (LSQCSMNNSFT) shows a compositional bias: polar residues. Positions 1913–1948 (SMNMNTLNAMNSYRMTQPMMNSSYHSNPAYMNQTAQ) are required for activation of RUNX1-2.

Belongs to the MYST (SAS/MOZ) family. In terms of assembly, component of the MOZ/MORF complex composed at least of ING5, KAT6A, KAT6B, MEAF6 and one of BRPF1, BRD1/BRPF2 and BRPF3. Interacts with RUNX1; phosphorylation of RUNX1 enhances the interaction. Interacts with RUNX2. Interacts with p53/TP53. Interacts with PML (isoform PML-4) and this interaction positively regulates its acetylation activity towards p53/TP53. Autoacetylation at Lys-604 is required for proper function. Autoacetylated. Post-translationally, phosphorylation at Thr-369 by PKB/AKT1 inhibits its interaction with PML and negatively regulates its acetylation activity towards p53/TP53.

Its subcellular location is the nucleus. The protein localises to the nucleolus. It localises to the nucleoplasm. The protein resides in the PML body. The catalysed reaction is L-lysyl-[protein] + acetyl-CoA = N(6)-acetyl-L-lysyl-[protein] + CoA + H(+). Its function is as follows. Histone acetyltransferase that acetylates lysine residues in histone H3 and histone H4 (in vitro). Component of the MOZ/MORF complex which has a histone H3 acetyltransferase activity. May act as a transcriptional coactivator for RUNX1 and RUNX2. Acetylates p53/TP53 at 'Lys-120' and 'Lys-382' and controls its transcriptional activity via association with PML. This Homo sapiens (Human) protein is Histone acetyltransferase KAT6A (KAT6A).